A 346-amino-acid chain; its full sequence is Leucine zipper protein 2 (346 aa).

The signal sequence occupies residues methionine 1–serine 17. N-linked (GlcNAc...) asparagine glycans are attached at residues asparagine 19 and asparagine 131. The stretch at arginine 41 to histidine 209 forms a coiled coil. A leucine-zipper region spans residues leucine 162–leucine 190. Residues asparagine 241 and asparagine 296 are each glycosylated (N-linked (GlcNAc...) asparagine). The segment at serine 271–asparagine 346 is disordered. Polar residues predominate over residues cysteine 293–alanine 324. Residues threonine 326–asparagine 346 show a composition bias toward basic and acidic residues.

The protein localises to the secreted. The polypeptide is Leucine zipper protein 2 (luzp2) (Danio rerio (Zebrafish)).